Here is a 617-residue protein sequence, read N- to C-terminus: Dihydroxy-acid dehydratase (617 aa).

A Mg(2+)-binding site is contributed by Asp-81. Cys-122 serves as a coordination point for [2Fe-2S] cluster. 2 residues coordinate Mg(2+): Asp-123 and Lys-124. Lys-124 bears the N6-carboxylysine mark. Cys-197 contacts [2Fe-2S] cluster. Glu-493 is a Mg(2+) binding site. Ser-519 acts as the Proton acceptor in catalysis.

The protein belongs to the IlvD/Edd family. Homodimer. It depends on [2Fe-2S] cluster as a cofactor. Requires Mg(2+) as cofactor.

It carries out the reaction (2R)-2,3-dihydroxy-3-methylbutanoate = 3-methyl-2-oxobutanoate + H2O. The enzyme catalyses (2R,3R)-2,3-dihydroxy-3-methylpentanoate = (S)-3-methyl-2-oxopentanoate + H2O. The protein operates within amino-acid biosynthesis; L-isoleucine biosynthesis; L-isoleucine from 2-oxobutanoate: step 3/4. It participates in amino-acid biosynthesis; L-valine biosynthesis; L-valine from pyruvate: step 3/4. Functions in the biosynthesis of branched-chain amino acids. Catalyzes the dehydration of (2R,3R)-2,3-dihydroxy-3-methylpentanoate (2,3-dihydroxy-3-methylvalerate) into 2-oxo-3-methylpentanoate (2-oxo-3-methylvalerate) and of (2R)-2,3-dihydroxy-3-methylbutanoate (2,3-dihydroxyisovalerate) into 2-oxo-3-methylbutanoate (2-oxoisovalerate), the penultimate precursor to L-isoleucine and L-valine, respectively. The polypeptide is Dihydroxy-acid dehydratase (Corynebacterium aurimucosum (strain ATCC 700975 / DSM 44827 / CIP 107346 / CN-1) (Corynebacterium nigricans)).